The primary structure comprises 1834 residues: Non-reducing polyketide synthase spyA (1834 aa).

Residues 91–255 (LAPLTVIIHL…TRIPIYGRYH (165 aa)) enclose the Starter acyltransferase (SAT) domain. Residues 385–801 (EHSIAVIGAA…GNNTAVIVCE (417 aa)) enclose the Ketosynthase family 3 (KS3) domain. Active-site for beta-ketoacyl synthase activity residues include C551, H687, and H724. One can recognise a Malonyl-CoA:ACP transacylase (MAT) domain in the interval 919 to 1164 (YEGSSLLRSH…KELGPCTWVE (246 aa)). An N-terminal hotdog fold region spans residues 1269–1398 (PLVYLLRDEG…GVISLRQERH (130 aa)). Residues 1269–1577 (PLVYLLRDEG…FVRITASSLN (309 aa)) form the PKS/mFAS DH domain. Positions 1269–1577 (PLVYLLRDEG…FVRITASSLN (309 aa)) are product template (PT) domain. The tract at residues 1428–1577 (AISLKEGIIY…FVRITASSLN (150 aa)) is C-terminal hotdog fold. The Carrier 1 domain occupies 1616–1690 (SDILSILSHL…TLCQEIQTQR (75 aa)). S1650 is modified (O-(pantetheine 4'-phosphoryl)serine). The disordered stretch occupies residues 1693 to 1720 (RLARASRTTTATRNTSFSLGRRTSSTES). A compositionally biased stretch (low complexity) spans 1697 to 1710 (ASRTTTATRNTSFS). The Carrier 2 domain maps to 1731–1807 (SKSAAVLAQL…GLARLILASE (77 aa)). S1767 carries the post-translational modification O-(pantetheine 4'-phosphoryl)serine.

Pantetheine 4'-phosphate is required as a cofactor.

The catalysed reaction is 2 malonyl-CoA + acetyl-CoA + 2 H(+) = triacetate lactone + 2 CO2 + 3 CoA. It functions in the pathway secondary metabolite biosynthesis; terpenoid biosynthesis. Non-reducing polyketide synthase; part of the gene cluster that mediates the biosynthesis of meroterpenoids called sartorypyrones. The biosynthesis of sartorypyrones begins with the production of triacetic acid lactone (TAL) by the NR-PKS spyA using one molecule of acetyl-CoA and two molecules of malonyl-CoA. As spyA lacks a thioesterase (TE) domain, TAL is likely generated through self-release from spyA by spontaneous lactonization. After production of TAL, the prenyltransferase spyF then conjugates geranylgeranyl pyrophosphate (GGPP) to TAL to form geranylgeranyl-triacetate lactone, for which the pathway-specific geranylgeranyl pyrophosphate synthase (GGPS) spyE is required to provide GGPP. Subsequently, geranylgeranyl-triacetate lactone is epoxidized at the terminal olein by the FAD-dependent monooxygenase spyC, followed by cyclization of the terpenoid component catalyzed by the terpene cyclase spyD to produce both the bicyclic sartorypyrone F and the monocyclic sartorypyrone D. Finally, the last step of the biosynthesis involves the acetylation of the meroterpenoids sartorypyrones D and F by the acetyltransferase SpyB to produce sartorypyrones A and G, respectively. The polypeptide is Non-reducing polyketide synthase spyA (Aspergillus fumigatus (strain ATCC MYA-4609 / CBS 101355 / FGSC A1100 / Af293) (Neosartorya fumigata)).